Consider the following 372-residue polypeptide: Lipoyl synthase, mitochondrial (372 aa).

Residues cysteine 103, cysteine 108, cysteine 114, cysteine 134, cysteine 138, cysteine 141, and serine 349 each coordinate [4Fe-4S] cluster. Positions glutamate 119–leucine 338 constitute a Radical SAM core domain.

It belongs to the radical SAM superfamily. Lipoyl synthase family. The cofactor is [4Fe-4S] cluster.

Its subcellular location is the mitochondrion. It carries out the reaction [[Fe-S] cluster scaffold protein carrying a second [4Fe-4S](2+) cluster] + N(6)-octanoyl-L-lysyl-[protein] + 2 oxidized [2Fe-2S]-[ferredoxin] + 2 S-adenosyl-L-methionine + 4 H(+) = [[Fe-S] cluster scaffold protein] + N(6)-[(R)-dihydrolipoyl]-L-lysyl-[protein] + 4 Fe(3+) + 2 hydrogen sulfide + 2 5'-deoxyadenosine + 2 L-methionine + 2 reduced [2Fe-2S]-[ferredoxin]. The protein operates within protein modification; protein lipoylation via endogenous pathway; protein N(6)-(lipoyl)lysine from octanoyl-[acyl-carrier-protein]: step 2/2. In terms of biological role, catalyzes the radical-mediated insertion of two sulfur atoms into the C-6 and C-8 positions of the octanoyl moiety bound to the lipoyl domains of lipoate-dependent enzymes, thereby converting the octanoylated domains into lipoylated derivatives. In Drosophila willistoni (Fruit fly), this protein is Lipoyl synthase, mitochondrial.